The following is a 992-amino-acid chain: Epstein-Barr nuclear antigen 6 (992 aa).

The segment at 1–70 (MESFEGQGDS…SRGDENRGWM (70 aa)) is disordered. Residues 12-31 (QSPDNERGDNVQTTGEHDQD) are compositionally biased toward basic and acidic residues. Positions 130–159 (LILDSGLDTQHILCFVMAARQRLQDIRRGP) are interaction with host PIM1. Disordered regions lie at residues 355–905 (ATGG…DSMA), 931–954 (PLDI…PARC), and 967–992 (DNSE…SELD). Residues 381-391 (VELESSDDELP) are compositionally biased toward acidic residues. Polar residues predominate over residues 445–461 (AQSTPERPGPSEQSSVT). The span at 479-495 (QPPPVPKPVPVKPTPPP) shows a compositional bias: pro residues. Residues 506 to 520 (YDDDVIEVIDVETTE) are compositionally biased toward acidic residues. Residues 551–555 (PPTVS) form a 1-1; approximate repeat. The segment at 551-610 (PPTVSPSDTGPPAVGPPAAGPPAAGPPAAGPPAAGPPAAGPPAAGPRILAPLSAGPPAAG) is 12 X 5 AA approximate tandem repeats of P-P-A-A-G. The stretch at 556 to 560 (PSDTG) is one 2-1; approximate repeat. A 3-1; approximate repeat occupies 561 to 565 (PPAVG). Residues 563–594 (AVGPPAAGPPAAGPPAAGPPAAGPPAAGPPAA) show a composition bias toward pro residues. 6 tandem repeats follow at residues 566-570 (PPAAG), 571-575 (PPAAG), 576-580 (PPAAG), 581-585 (PPAAG), 586-590 (PPAAG), and 591-595 (PPAAG). Positions 595-611 (GPRILAPLSAGPPAAGP) are enriched in low complexity. The 10-1; approximate repeat unit spans residues 596–600 (PRILA). Residues 601–605 (PLSAG) form an 11-1; approximate repeat. Residues 606-610 (PPAAG) form a 12-1 repeat. 2 stretches are compositionally biased toward polar residues: residues 659–676 (TQMQ…TQPT) and 700–714 (IESS…TQPI). Residues 715–724 (SHEEQPRYED) are compositionally biased toward basic and acidic residues. Composition is skewed to low complexity over residues 738-764 (AAQP…QGYQ) and 772-781 (PYQGYQEPPA). 3 tandem repeats follow at residues 741-753 (PAPQ…YQEP), 754-766 (PAPQ…YQEP), and 767-779 (PPPQ…YQEP). Positions 741–779 (PAPQAPYQGYQEPPAPQAPYQGYQEPPPPQAPYQGYQEP) are 3 X 13 AA tandem repeats of P-[AP]-P-Q-A-P-Y-Q-G-Y-Q-E-P. Positions 845 to 857 (DQVSQFPHLQSET) are enriched in polar residues. The segment covering 859–881 (PPRLQLSLVPLVSSSAPSWSSPQ) has biased composition (low complexity). Over residues 882-899 (PRAPIRPIPTRFPPPPMP) the composition is skewed to pro residues.

Belongs to the herpesviridae EBNA-6 family. In terms of assembly, interacts with host CTPB1; this interaction leads to gene repression, but also seems to interfere with the repressive function of CtBP pre-bound to DNA, leading to EBNA6 mediated up-regulation of many host genes. Interacts with host MYC; this interaction enhances MYC stability. Interacts (via N-terminus) with host RBPJ. Interacts (via N-terminus) with host histone H2AX; this interaction facilitates H2AX proteasomal degradation. Interacts with host TP73; this interaction inhibits TP73-mediated apoptotic pathway. Interacts (via N-terminus) with host PIM1; this interaction upregulates and stabilizes PIM1 and induces cell proliferation by inhibiting the growth suppressive properties of p21.

Its subcellular location is the host nucleus. It localises to the host nucleus matrix. Functionally, plays an essential role for the activation and immortalization of human B-cells. Represses transcription of viral promoters TP1 and Cp through interaction with host RBPJ, and inhibits EBNA2-mediated activation of these promoters. Targets host chromatin through interactions with host transcription factors, especially RBPJ and IRF4. Alternatively, EBNA6 also regulates the transcription of the EBV oncogene LMP1 in a cell cycle-dependent manner. Modulates the activity of several host proteins involved in cell cycle regulation including host cyclin A, MYC, RB, p21 and p27 mainly through binding to the host SCF(SKP2) complex. Inhibits the promoter of host H2AX and targets H2AX to proteasomal degradation in order to promote latency and cell proliferation. Upregulates host PIM1 expression and stabilization. Potentiates PIM1 to promote cell proliferation by inhibiting the growth suppressive properties of p21. In Epstein-Barr virus (strain B95-8) (HHV-4), this protein is Epstein-Barr nuclear antigen 6 (EBNA6).